We begin with the raw amino-acid sequence, 305 residues long: Ribonuclease BN (305 aa).

Zn(2+)-binding residues include histidine 64, histidine 66, aspartate 68, histidine 69, histidine 141, aspartate 212, and histidine 270. The active-site Proton acceptor is aspartate 68.

The protein belongs to the RNase Z family. RNase BN subfamily. Homodimer. It depends on Zn(2+) as a cofactor.

Functionally, zinc phosphodiesterase, which has both exoribonuclease and endoribonuclease activities. In Salmonella agona (strain SL483), this protein is Ribonuclease BN.